The chain runs to 152 residues: Deoxyuridine 5'-triphosphate nucleotidohydrolase (152 aa).

Substrate-binding positions include 71–73 (RSG), Asn-84, 88–90 (LID), and Met-98.

The protein belongs to the dUTPase family. The cofactor is Mg(2+).

It carries out the reaction dUTP + H2O = dUMP + diphosphate + H(+). It participates in pyrimidine metabolism; dUMP biosynthesis; dUMP from dCTP (dUTP route): step 2/2. Functionally, this enzyme is involved in nucleotide metabolism: it produces dUMP, the immediate precursor of thymidine nucleotides and it decreases the intracellular concentration of dUTP so that uracil cannot be incorporated into DNA. This is Deoxyuridine 5'-triphosphate nucleotidohydrolase from Shewanella loihica (strain ATCC BAA-1088 / PV-4).